The following is a 319-amino-acid chain: MIDLAPLVRRLAGTPLAEWANGLQAQLDTKMSKGHGDLQRWQSALDALPALQPEKVDLTDSFTLETECDGETRTVLRKALLGLSPWRKGPFNVFGVHIDTEWRSDWKWSRVSPHLDLKGKRVLDVGCGNGYYQWRMLGAGADSVIGVDPNWLFFCQFQAMQRYLPDLPAWHLPFALEDLPANLEGFDTVFSMGVLYHRKSPIDHLLALKDCLVKGGELVMETLVIPGDVHQVLVPEDRYAQMRNVWFLPSVPALELWMRRAGFTDVRCVDVSHTTVEEQRSTEWMRFQSLGDYLDPNDHSKTVEGLPAPMRAVIVGRKP.

Carboxy-S-adenosyl-L-methionine is bound by residues K88, W102, K107, G126, 176–177 (LE), M192, Y196, and R311.

It belongs to the class I-like SAM-binding methyltransferase superfamily. CmoB family. As to quaternary structure, homotetramer.

The enzyme catalyses carboxy-S-adenosyl-L-methionine + 5-hydroxyuridine(34) in tRNA = 5-carboxymethoxyuridine(34) in tRNA + S-adenosyl-L-homocysteine + H(+). Functionally, catalyzes carboxymethyl transfer from carboxy-S-adenosyl-L-methionine (Cx-SAM) to 5-hydroxyuridine (ho5U) to form 5-carboxymethoxyuridine (cmo5U) at position 34 in tRNAs. This chain is tRNA U34 carboxymethyltransferase, found in Pseudomonas syringae pv. tomato (strain ATCC BAA-871 / DC3000).